The chain runs to 507 residues: ATP synthase subunit alpha, chloroplastic (507 aa).

Residue Gly170–Thr177 participates in ATP binding.

The protein belongs to the ATPase alpha/beta chains family. As to quaternary structure, F-type ATPases have 2 components, CF(1) - the catalytic core - and CF(0) - the membrane proton channel. CF(1) has five subunits: alpha(3), beta(3), gamma(1), delta(1), epsilon(1). CF(0) has four main subunits: a, b, b' and c.

It localises to the plastid. The protein localises to the chloroplast thylakoid membrane. The enzyme catalyses ATP + H2O + 4 H(+)(in) = ADP + phosphate + 5 H(+)(out). Functionally, produces ATP from ADP in the presence of a proton gradient across the membrane. The alpha chain is a regulatory subunit. This Sorghum bicolor (Sorghum) protein is ATP synthase subunit alpha, chloroplastic.